The following is a 381-amino-acid chain: Heterogeneous nuclear rnp K-like protein 2 (381 aa).

The tract at residues 1-34 (MSQFFEAATPVAIPTNNTNGGSSDAGSAATGGAP) is disordered. Residues 15-33 (TNNTNGGSSDAGSAATGGA) are compositionally biased toward low complexity. 3 consecutive KH domains span residues 43 to 107 (TINH…IGDI), 156 to 221 (IGYV…LIEI), and 258 to 326 (NTRI…ESML). The tract at residues 344 to 381 (LEAAEGDATVVTERSDSASFLEEKEEPQKNHDNKEEQS) is disordered. Phosphoserine is present on residues Ser-358, Ser-360, and Ser-362. Positions 369–381 (EPQKNHDNKEEQS) are enriched in basic and acidic residues.

This sequence belongs to the HEK2 family. Binds RNA. Phosphorylated by the plasma membrane-Anchored casein kinase YCK1. Phosphorylation at its C-terminus reduces its RNA-binding capacity.

The protein resides in the cytoplasm. Its subcellular location is the P-body. It is found in the nucleus. It localises to the chromosome. The protein localises to the telomere. In terms of biological role, RNA-binding protein involved in the correct localization of transcripts in the cell. RNA localization is a widespread mechanism for achieving localized protein synthesis. Required for the asymmetric localization to the daughter cell nucleus of the ASH1 transcript, coding for a specific repressor of transcription. Overexpression inhibits translation of the ASH1 transcript. Involved in the stability of transcripts, like the MTL1 mRNA. Involved in structural and functional organization of telomeric chromatin and regulates silencing at the HMR locus. The protein is Heterogeneous nuclear rnp K-like protein 2 (HEK2) of Saccharomyces cerevisiae (strain JAY291) (Baker's yeast).